The primary structure comprises 405 residues: Argininosuccinate synthase (405 aa).

Position 12 to 20 (12 to 20 (AYSGGLDTS)) interacts with ATP. L-citrulline is bound by residues Tyr90 and Ser95. Gly120 contacts ATP. 3 residues coordinate L-aspartate: Thr122, Asn126, and Asp127. Asn126 lines the L-citrulline pocket. L-citrulline contacts are provided by Arg130, Ser179, Ser188, Glu265, and Tyr277.

This sequence belongs to the argininosuccinate synthase family. Type 1 subfamily. As to quaternary structure, homotetramer.

Its subcellular location is the cytoplasm. The catalysed reaction is L-citrulline + L-aspartate + ATP = 2-(N(omega)-L-arginino)succinate + AMP + diphosphate + H(+). It functions in the pathway amino-acid biosynthesis; L-arginine biosynthesis; L-arginine from L-ornithine and carbamoyl phosphate: step 2/3. This chain is Argininosuccinate synthase, found in Clostridium perfringens (strain 13 / Type A).